The chain runs to 101 residues: Small ribosomal subunit protein bS18c (101 aa).

This sequence belongs to the bacterial ribosomal protein bS18 family. Part of the 30S ribosomal subunit.

The protein resides in the plastid. The protein localises to the chloroplast. The chain is Small ribosomal subunit protein bS18c from Populus alba (White poplar).